A 229-amino-acid chain; its full sequence is Ribosome maturation factor RimM (229 aa).

The disordered stretch occupies residues 1 to 21 (MAGHDSGNAKRGRSPSFGVFV). Residues 148 to 229 (ADEFYWVDLI…RVVVDWEADY (82 aa)) enclose the PRC barrel domain.

This sequence belongs to the RimM family. In terms of assembly, binds ribosomal protein uS19.

It is found in the cytoplasm. In terms of biological role, an accessory protein needed during the final step in the assembly of 30S ribosomal subunit, possibly for assembly of the head region. Essential for efficient processing of 16S rRNA. May be needed both before and after RbfA during the maturation of 16S rRNA. It has affinity for free ribosomal 30S subunits but not for 70S ribosomes. In Burkholderia mallei (strain NCTC 10247), this protein is Ribosome maturation factor RimM.